Consider the following 400-residue polypeptide: Endoglucanase A (400 aa).

Positions 1–32 (MTKTFKKFSIAGLALLFMATAAFAGWSTKASA) are cleaved as a signal peptide. Residue Glu-187 is the Proton donor of the active site. Glu-328 (nucleophile) is an active-site residue.

This sequence belongs to the glycosyl hydrolase 5 (cellulase A) family.

The protein resides in the secreted. The enzyme catalyses Endohydrolysis of (1-&gt;4)-beta-D-glucosidic linkages in cellulose, lichenin and cereal beta-D-glucans.. Its activity is regulated as follows. Strongly inhibited by Hg(2+), Ag(+) and Fe(3+). To a lesser extent, is also inhibited by Pb(2+), Mn(2+), Sn(2+) and Cu(2+). By contrast, Ni(2+), Zn(2+), Co(2+), Ba(2+) and NH(4)(+) do not affect enzyme activity, while 10 mM Ca(2+), and Mg(2+) produce a stimulating effect. Is also strongly inhibited by chemicals such as N-bromosuccinimide and dimethyl(2-dihydroxy-5-nitrobenzyl)sulphonium bromide. Is not affected by N-acetylimidazole. Functionally, endoglucanase with high activity on carboxymethylcellulose (CMC) and lichenan, but not active on Avicel. The polypeptide is Endoglucanase A (celA) (Paenibacillus barcinonensis).